A 350-amino-acid chain; its full sequence is 4-hydroxy-2-oxovalerate aldolase 2 (350 aa).

The Pyruvate carboxyltransferase domain maps to 8 to 260 (ITVHDMTLRD…ETGVDVFKIQ (253 aa)). 16 to 17 (RD) is a binding site for substrate. Asp17 serves as a coordination point for Mn(2+). His20 (proton acceptor) is an active-site residue. The substrate site is built by Ser170 and His199. Positions 199 and 201 each coordinate Mn(2+). Tyr290 contacts substrate.

Belongs to the 4-hydroxy-2-oxovalerate aldolase family.

The enzyme catalyses (S)-4-hydroxy-2-oxopentanoate = acetaldehyde + pyruvate. The sequence is that of 4-hydroxy-2-oxovalerate aldolase 2 (tesG) from Comamonas testosteroni (Pseudomonas testosteroni).